A 245-amino-acid polypeptide reads, in one-letter code: MGAPYDFAPERPDHIQQILDGLDRYNPETTGVFQDYVMQQCESQTYDCYANLALLKLYQFNPHLSRDETVTNILVKALTMFPSPDFALGLSLLPSHLLAPLNSSAHNPAAGDAPLSEAVQKLNELRNLLEGADYATFWSTLDSDDLYADLIADVSGFEELMRVRIAATVSQAVREVDRSILESWLNLEGSDFEHFVGSVCGWTIEGAKIKVPMNKDNEAKGTVVRENVKFDQFARVIKRAYEQPA.

The PCI domain maps to 46 to 227 (YDCYANLALL…EAKGTVVREN (182 aa)).

It belongs to the eIF-3 subunit K family. In terms of assembly, component of the eukaryotic translation initiation factor 3 (eIF-3) complex.

Its subcellular location is the cytoplasm. Its function is as follows. Component of the eukaryotic translation initiation factor 3 (eIF-3) complex, which is involved in protein synthesis of a specialized repertoire of mRNAs and, together with other initiation factors, stimulates binding of mRNA and methionyl-tRNAi to the 40S ribosome. The eIF-3 complex specifically targets and initiates translation of a subset of mRNAs involved in cell proliferation. This Phaeosphaeria nodorum (strain SN15 / ATCC MYA-4574 / FGSC 10173) (Glume blotch fungus) protein is Eukaryotic translation initiation factor 3 subunit K.